A 280-amino-acid chain; its full sequence is Hemin import ATP-binding protein HmuV (280 aa).

The ABC transporter domain occupies 26 to 260; sequence LAAAGGLRVH…GLLSEVYDQP (235 aa). Residue 59-66 coordinates ATP; sequence GPNGAGKS.

The protein belongs to the ABC transporter superfamily. Heme (hemin) importer (TC 3.A.1.14.5) family. In terms of assembly, the complex is composed of two ATP-binding proteins (HmuV), two transmembrane proteins (HmuU) and a solute-binding protein (HmuT).

It is found in the cell membrane. Its function is as follows. Part of the ABC transporter complex HmuTUV involved in hemin import. Responsible for energy coupling to the transport system. This Streptomyces coelicolor (strain ATCC BAA-471 / A3(2) / M145) protein is Hemin import ATP-binding protein HmuV.